The chain runs to 152 residues: 6,7-dimethyl-8-ribityllumazine synthase (152 aa).

Residues phenylalanine 22, 54–56 (AFE), and 78–80 (AVI) each bind 5-amino-6-(D-ribitylamino)uracil. 83–84 (ET) lines the (2S)-2-hydroxy-3-oxobutyl phosphate pocket. The active-site Proton donor is the histidine 86. Residue phenylalanine 111 coordinates 5-amino-6-(D-ribitylamino)uracil. Arginine 125 serves as a coordination point for (2S)-2-hydroxy-3-oxobutyl phosphate.

Belongs to the DMRL synthase family.

It catalyses the reaction (2S)-2-hydroxy-3-oxobutyl phosphate + 5-amino-6-(D-ribitylamino)uracil = 6,7-dimethyl-8-(1-D-ribityl)lumazine + phosphate + 2 H2O + H(+). It participates in cofactor biosynthesis; riboflavin biosynthesis; riboflavin from 2-hydroxy-3-oxobutyl phosphate and 5-amino-6-(D-ribitylamino)uracil: step 1/2. In terms of biological role, catalyzes the formation of 6,7-dimethyl-8-ribityllumazine by condensation of 5-amino-6-(D-ribitylamino)uracil with 3,4-dihydroxy-2-butanone 4-phosphate. This is the penultimate step in the biosynthesis of riboflavin. This Limosilactobacillus reuteri (strain DSM 20016) (Lactobacillus reuteri) protein is 6,7-dimethyl-8-ribityllumazine synthase.